Consider the following 158-residue polypeptide: Ribosome maturation factor RimP (158 aa).

The protein belongs to the RimP family.

The protein resides in the cytoplasm. Functionally, required for maturation of 30S ribosomal subunits. The protein is Ribosome maturation factor RimP of Pseudomonas syringae pv. tomato (strain ATCC BAA-871 / DC3000).